Here is a 166-residue protein sequence, read N- to C-terminus: MSPKKAKKRAEGANYNVFSMFEQTQIQEFKEAFTIMDQNRDGFIDKNDLRDTFAALGRVNVKNEEIDEMLKEAPGPINFTVFLQMFGEKLKGADPEETILNAFKVFDPEGKGVLKADYIKEMLTTQAERFSKEEIDQMFAAFPPDVTGNLDYKNLVHIITHGEEKD.

Ser2 carries the post-translational modification N,N,N-trimethylserine. At Asn14 the chain carries Deamidated asparagine. A Phosphoserine modification is found at Ser19. 3 EF-hand domains span residues 24-59 (TQIQEFKEAFTIMDQNRDGFIDKNDLRDTFAALGRV), 94-129 (DPEETILNAFKVFDPEGKGVLKADYIKEMLTTQAER), and 130-165 (FSKEEIDQMFAAFPPDVTGNLDYKNLVHIITHGEEK). Positions 37, 39, 41, and 48 each coordinate Ca(2+). Thr52 carries the post-translational modification Phosphothreonine.

Myosin is a hexamer of 2 heavy chains and 4 light chains. Interacts with MYOC. Post-translationally, N-terminus is methylated by METTL11A/NTM1. In terms of processing, phosphorylated by MYLK3 and MYLK2; promotes cardiac muscle contraction and function. Dephosphorylated by PPP1CB complexed to PPP1R12B. The phosphorylated form in adult is expressed as gradients across the heart from endocardium (low phosphorylation) to epicardium (high phosphorylation); regulates cardiac torsion and workload distribution.

It localises to the cytoplasm. It is found in the myofibril. The protein resides in the sarcomere. Its subcellular location is the a band. Contractile protein that plays a role in heart development and function. Following phosphorylation, plays a role in cross-bridge cycling kinetics and cardiac muscle contraction by increasing myosin lever arm stiffness and promoting myosin head diffusion; as a consequence of the increase in maximum contraction force and calcium sensitivity of contraction force. These events altogether slow down myosin kinetics and prolong duty cycle resulting in accumulated myosins being cooperatively recruited to actin binding sites to sustain thin filament activation as a means to fine-tune myofilament calcium sensitivity to force. During cardiogenesis plays an early role in cardiac contractility by promoting cardiac myofibril assembly. In Bos taurus (Bovine), this protein is Myosin regulatory light chain 2, ventricular/cardiac muscle isoform.